The chain runs to 210 residues: Protein LURP-one-related 5 (210 aa).

It belongs to the LOR family.

Might be related to the phospholipid scramblase and tubby-like superfamily of membrane tethered transcription factors. The polypeptide is Protein LURP-one-related 5 (Arabidopsis thaliana (Mouse-ear cress)).